Consider the following 526-residue polypeptide: MNGPRHDTSLFRERDVVPIRRALISVSDKTGLLDLAASLADAGVEIVSTGSTAQTIREAGHTVTDVASVTGFPESLDGRVKTLHPAIHSGLLADLRLASHEEQLKDLGIEPFELVVVNLYPFVETVASGAVDDDVVEQIDIGGPAMVRASAKNHANVAIVVSPADYAGLAAAVAAGGTTWGQRRELAARAFAHTAAYDGAVAAWFAGEAPDLSAVAERFEVRAEWGQPLRYGENAHQAAALYADPAGCGIAQASQHGGKEMSYNNYVDADAALRSAYDFAEPAVAIVKHANPCGIAVAGDIAEAHRKAHECDPVSAYGGVIAANRTVTLAMAETVRGIFTEVLIAPGYEPGALELLKTKKNLRILELPVGYARSLTEFRQISGGVLVQDTDRFDEFDSSGWTLVAGAEADAVTRADLEFTWKACRAVKSNAILLAKDGASVGVGMGQVNRVDSCTLAVSRAAERAVGAVAASDAFFPFADGPEILIAAGVAAIVQPGGSIRDEEVIASATAAGVTMYFTGERHFFH.

Positions 15-161 constitute an MGS-like domain; the sequence is DVVPIRRALI…KNHANVAIVV (147 aa).

It belongs to the PurH family.

It catalyses the reaction (6R)-10-formyltetrahydrofolate + 5-amino-1-(5-phospho-beta-D-ribosyl)imidazole-4-carboxamide = 5-formamido-1-(5-phospho-D-ribosyl)imidazole-4-carboxamide + (6S)-5,6,7,8-tetrahydrofolate. The enzyme catalyses IMP + H2O = 5-formamido-1-(5-phospho-D-ribosyl)imidazole-4-carboxamide. Its pathway is purine metabolism; IMP biosynthesis via de novo pathway; 5-formamido-1-(5-phospho-D-ribosyl)imidazole-4-carboxamide from 5-amino-1-(5-phospho-D-ribosyl)imidazole-4-carboxamide (10-formyl THF route): step 1/1. It functions in the pathway purine metabolism; IMP biosynthesis via de novo pathway; IMP from 5-formamido-1-(5-phospho-D-ribosyl)imidazole-4-carboxamide: step 1/1. The sequence is that of Bifunctional purine biosynthesis protein PurH from Leifsonia xyli subsp. xyli (strain CTCB07).